A 521-amino-acid polypeptide reads, in one-letter code: Cell cycle checkpoint protein hpr-9 (521 aa).

Disordered regions lie at residues 1-20 (MQAIHENYTDNPSSSITRER), 318-375 (QHEE…NRFV), and 492-521 (GTETTSKMRMSQQFDKRLGPLVSDTQYESR). Polar residues-rich tracts occupy residues 355-370 (ESLSQEETTRSQSLPS) and 493-504 (TETTSKMRMSQQ).

This sequence belongs to the rad9 family. In terms of assembly, putative component of the toroidal 9-1-1 (RAD9-RAD1-HUS1) complex, composed of hpr-9, mrt-2 and hus-1.

Functionally, may be a component of the 9-1-1 cell-cycle checkpoint response complex that plays a major role in DNA repair. The protein is Cell cycle checkpoint protein hpr-9 of Caenorhabditis elegans.